The following is a 268-amino-acid chain: Mediator of RNA polymerase II transcription subunit 8-A (268 aa).

Coiled-coil stretches lie at residues 1-26 (MQREEKQLEACLDALISQVSDIKNSL) and 117-160 (VEEL…EERE). Residues 190–268 (GLSNRRPPGQ…KSASMHPYQR (79 aa)) form a disordered region. Polar residues predominate over residues 223–246 (VPMSLQSNQQQQHMAGVSMSQGNQ).

The protein belongs to the Mediator complex subunit 8 family. Component of the Mediator complex. May be part of a multisubunit E3 ubiquitin-protein ligase complex.

The protein localises to the nucleus. It functions in the pathway protein modification; protein ubiquitination. Its function is as follows. Component of the Mediator complex, a coactivator involved in the regulated transcription of nearly all RNA polymerase II-dependent genes. Mediator functions as a bridge to convey information from gene-specific regulatory proteins to the basal RNA polymerase II transcription machinery. Mediator is recruited to promoters by direct interactions with regulatory proteins and serves as a scaffold for the assembly of a functional preinitiation complex with RNA polymerase II and the general transcription factors. May play a role as a target recruitment subunit in E3 ubiquitin-protein ligase complexes and thus in ubiquitination and subsequent proteasomal degradation of target proteins. This Xenopus laevis (African clawed frog) protein is Mediator of RNA polymerase II transcription subunit 8-A (med8-a).